The primary structure comprises 101 residues: NAD(P)H-quinone oxidoreductase subunit 4L, chloroplastic (101 aa).

The next 3 membrane-spanning stretches (helical) occupy residues 2-22 (ILEH…YGLI), 32-52 (MCLE…SDFF), and 61-81 (IFSI…LAIV).

This sequence belongs to the complex I subunit 4L family. In terms of assembly, NDH is composed of at least 16 different subunits, 5 of which are encoded in the nucleus.

Its subcellular location is the plastid. It localises to the chloroplast thylakoid membrane. It carries out the reaction a plastoquinone + NADH + (n+1) H(+)(in) = a plastoquinol + NAD(+) + n H(+)(out). The enzyme catalyses a plastoquinone + NADPH + (n+1) H(+)(in) = a plastoquinol + NADP(+) + n H(+)(out). Functionally, NDH shuttles electrons from NAD(P)H:plastoquinone, via FMN and iron-sulfur (Fe-S) centers, to quinones in the photosynthetic chain and possibly in a chloroplast respiratory chain. The immediate electron acceptor for the enzyme in this species is believed to be plastoquinone. Couples the redox reaction to proton translocation, and thus conserves the redox energy in a proton gradient. In Eucalyptus globulus subsp. globulus (Tasmanian blue gum), this protein is NAD(P)H-quinone oxidoreductase subunit 4L, chloroplastic.